Reading from the N-terminus, the 1481-residue chain is Cystic fibrosis transmembrane conductance regulator (1481 aa).

The Cytoplasmic segment spans residues 1–77; the sequence is MQRSPLEKAS…KLINALRRCF (77 aa). Residues 78–98 form a helical membrane-spanning segment; sequence FWRFMFYGIILYLGEVTKAVQ. One can recognise an ABC transmembrane type-1 1 domain in the interval 81–365; sequence FMFYGIILYL…WAVQTWYDSL (285 aa). Residues 99–122 lie on the Extracellular side of the membrane; it reads PLLLGRIIASYDPDNKAERSIAIY. Residues 123 to 146 form a helical membrane-spanning segment; that stretch reads LGIGLCLLFIVRTLLLHPAIFGLH. Residues 147 to 195 lie on the Cytoplasmic side of the membrane; sequence HIGMQMRIAMFSLIYKKTLKLSSRVLDKISIGQLVSLLSNNLNKFDEGL. Residues 196–216 traverse the membrane as a helical segment; sequence ALAHFVWIAPLQVTLLMGLLW. The Extracellular portion of the chain corresponds to 217–222; that stretch reads ELLQAF. Residues 223 to 243 form a helical membrane-spanning segment; that stretch reads TFCGLAFLVVLAFLQAGLGKM. Topologically, residues 244 to 298 are cytoplasmic; it reads MMKYRDQRAGKINERLVITSEIIENIQSVKAYCWEEAMEKIIENLRQTELKLTRK. Residues 299 to 319 form a helical membrane-spanning segment; that stretch reads AAYVRYLNSSAFFFSGFFVVF. Over 320 to 339 the chain is Extracellular; it reads LSVLPYALLKGIILRKIFTT. A helical transmembrane segment spans residues 340–358; that stretch reads ISFCIVLRMAVTRQFPWAV. The Cytoplasmic portion of the chain corresponds to 359 to 858; it reads QTWYDSLGAI…YLRYITVHKS (500 aa). Residues Trp-401, 457–464, and Gln-492 each bind ATP; that span reads GSTGAGKT. The ABC transporter 1 domain maps to 423 to 645; the sequence is NGDNNLFFSN…RPDFSSKLMG (223 aa). A lipid anchor (S-palmitoyl cysteine) is attached at Cys-523. Phosphoserine is present on residues Ser-548 and Ser-659. Residues 653–831 are disordered R region; sequence TAERRNSIIT…EEINEEDLRD (179 aa). A Phosphoserine; by PKA modification is found at Ser-669. Ser-685 carries the post-translational modification Phosphoserine. A Glycyl lysine isopeptide (Lys-Gly) (interchain with G-Cter in ubiquitin) cross-link involves residue Lys-687. Residues Ser-699 and Ser-711 each carry the phosphoserine modification. The residue at position 716 (Thr-716) is a Phosphothreonine. Phosphoserine occurs at positions 736, 767, 790, 795, and 813. The chain crosses the membrane as a helical span at residues 859 to 879; sequence LMFVLIWCLVVFLAEVAASLV. An ABC transmembrane type-1 2 domain is found at 859 to 1155; the sequence is LMFVLIWCLV…AVNSSIDVDS (297 aa). The Extracellular segment spans residues 880 to 918; that stretch reads VLCLFPKILFQDKGNSTKSANNSYAVIITSTSSYYIFYI. N-linked (GlcNAc...) asparagine glycans are attached at residues Asn-894 and Asn-900. Residues 919–939 traverse the membrane as a discontinuously helical segment; the sequence is YVGVADTLLALGLFRGLPLVH. Topologically, residues 940 to 990 are cytoplasmic; sequence TLITVSKTLHHKMLQSVLQAPMSTLNTLKTGGILNRFSKDIAVLDDLLPLT. A helical transmembrane segment spans residues 991-1011; the sequence is IFDFVQLLLIVIGAVVVVSVL. Over 1012-1013 the chain is Extracellular; the sequence is QP. The chain crosses the membrane as a helical span at residues 1014 to 1034; it reads YIFLATVPVIAAFILLRAYFL. Residues 1035 to 1095 are Cytoplasmic-facing; it reads HTSQQLKQLE…TANWFLYLST (61 aa). Residues 1096–1116 form a helical membrane-spanning segment; sequence LRWFQMRIEMIFVIFFIAVTF. Topologically, residues 1117–1130 are extracellular; sequence ISILTTGEGEGRVG. The chain crosses the membrane as a helical span at residues 1131–1151; the sequence is IILTLAMNIMGTLQWAVNSSI. At 1152 to 1481 the chain is on the cytoplasmic side; sequence DVDSLMRSVS…TEEEVQETKI (330 aa). The region spanning 1211-1444 is the ABC transporter 2 domain; sequence MTVKDLTAKY…KSLFRQAISP (234 aa). Residues Tyr-1220 and 1245 to 1252 each bind ATP; that span reads GRTGSGKS. The interval 1387–1481 is interaction with GORASP2; sequence RTLKQAFADC…TEEEVQETKI (95 aa). Cys-1396 carries the S-palmitoyl cysteine lipid modification. The tract at residues 1452-1481 is disordered; that stretch reads PQRNSSRQKSRSNIAALKEETEEEVQETKI. Residues 1453 to 1464 show a composition bias toward low complexity; sequence QRNSSRQKSRSN. Ser-1457 carries the post-translational modification Phosphoserine. Residues 1471–1481 are compositionally biased toward acidic residues; it reads ETEEEVQETKI. The PDZ-binding signature appears at 1479–1481; the sequence is TKI.

This sequence belongs to the ABC transporter superfamily. ABCC family. CFTR transporter (TC 3.A.1.202) subfamily. Monomer; does not require oligomerization for channel activity. May form oligomers in the membrane. Interacts with SLC26A3, SLC26A6 and NHERF1. Interacts with SHANK2. Interacts with MYO6. Interacts (via C-terminus) with GOPC (via PDZ domain); this promotes CFTR internalization and thereby decreases channel activity. Interacts with SLC4A7 through NHERF1. Found in a complex with MYO5B and RAB11A. Interacts with ANO1. Interacts with SLC26A8. Interacts with AHCYL1; the interaction increases CFTR activity. Interacts with CSE1L. The core-glycosylated form interacts with GORASP2 (via PDZ GRASP-type 1 domain) in respone to ER stress. Interacts with MARCHF2; the interaction leads to CFTR ubiqtuitination and degradation. Interacts with ADGRG2. In terms of processing, N-glycosylated. Phosphorylated; cAMP treatment promotes phosphorylation and activates the channel. Dephosphorylation decreases the ATPase activity (in vitro). Phosphorylation at PKA sites activates the channel. Phosphorylation at PKC sites enhances the response to phosphorylation by PKA. Phosphorylated by AMPK; this inhibits channel activity. Post-translationally, ubiquitinated, leading to its degradation in the lysosome. Deubiquitination by USP10 in early endosomes enhances its endocytic recycling to the cell membrane. Ubiquitinated by RNF185 during ER stress. Ubiquitinated by MARCHF2.

Its subcellular location is the apical cell membrane. The protein resides in the early endosome membrane. The protein localises to the cell membrane. It is found in the recycling endosome membrane. It localises to the endoplasmic reticulum membrane. Its subcellular location is the nucleus. The catalysed reaction is ATP + H2O + closed Cl(-) channel = ADP + phosphate + open Cl(-) channel.. It carries out the reaction chloride(in) = chloride(out). It catalyses the reaction hydrogencarbonate(in) = hydrogencarbonate(out). The enzyme catalyses ATP + H2O = ADP + phosphate + H(+). Epithelial ion channel that plays an important role in the regulation of epithelial ion and water transport and fluid homeostasis. Mediates the transport of chloride ions across the cell membrane. Possesses an intrinsic ATPase activity and utilizes ATP to gate its channel; the passive flow of anions through the channel is gated by cycles of ATP binding and hydrolysis by the ATP-binding domains. The ion channel is also permeable to HCO(3)(-); selectivity depends on the extracellular chloride concentration. Exerts its function also by modulating the activity of other ion channels and transporters. Contributes to the regulation of the pH and the ion content of the epithelial fluid layer. Modulates the activity of the epithelial sodium channel (ENaC) complex, in part by regulating the cell surface expression of the ENaC complex. May regulate bicarbonate secretion and salvage in epithelial cells by regulating the transporter SLC4A7. Can inhibit the chloride channel activity of ANO1. Plays a role in the chloride and bicarbonate homeostasis during sperm epididymal maturation and capacitation. This Muntiacus reevesi (Reeves' muntjac) protein is Cystic fibrosis transmembrane conductance regulator.